Consider the following 225-residue polypeptide: Octanoyltransferase (225 aa).

The region spanning 29 to 210 (PDTDDEIWVV…RLIAHLDGAT (182 aa)) is the BPL/LPL catalytic domain. Substrate is bound by residues 69–76 (RGGQITYH), 141–143 (ALG), and 154–156 (GLS). The active-site Acyl-thioester intermediate is C172.

The protein belongs to the LipB family.

Its subcellular location is the cytoplasm. The catalysed reaction is octanoyl-[ACP] + L-lysyl-[protein] = N(6)-octanoyl-L-lysyl-[protein] + holo-[ACP] + H(+). It functions in the pathway protein modification; protein lipoylation via endogenous pathway; protein N(6)-(lipoyl)lysine from octanoyl-[acyl-carrier-protein]: step 1/2. Its function is as follows. Catalyzes the transfer of endogenously produced octanoic acid from octanoyl-acyl-carrier-protein onto the lipoyl domains of lipoate-dependent enzymes. Lipoyl-ACP can also act as a substrate although octanoyl-ACP is likely to be the physiological substrate. The protein is Octanoyltransferase of Burkholderia pseudomallei (strain K96243).